The following is a 354-amino-acid chain: Glucose 1-dehydrogenase (354 aa).

The disordered stretch occupies residues 1-27 (MKVIGVTRDDDGPQLLERERPSPDPGE). Over residues 7–22 (TRDDDGPQLLERERPS) the composition is skewed to basic and acidic residues. Asp-38 is a Zn(2+) binding site. Thr-40 is a substrate binding site. Residues His-63 and Glu-64 each contribute to the Zn(2+) site. The tract at residues 91–110 (PNGETNEYFRRGEPDMAPDG) is disordered. Substrate-binding residues include Glu-114 and Glu-150. Zn(2+) is bound at residue Glu-150. NADP(+) contacts are provided by residues 181–184 (NGSL), 204–205 (RR), 269–271 (LGI), and 298–300 (TVN). Asn-300 serves as a coordination point for substrate.

This sequence belongs to the zinc-containing alcohol dehydrogenase family. Glucose 1-dehydrogenase subfamily. Zn(2+) is required as a cofactor.

The catalysed reaction is D-glucose + NAD(+) = D-glucono-1,5-lactone + NADH + H(+). It catalyses the reaction D-glucose + NADP(+) = D-glucono-1,5-lactone + NADPH + H(+). In terms of biological role, catalyzes the NAD(P)(+)-dependent oxidation of D-glucose to D-gluconate via gluconolactone. Can utilize both NAD(+) and NADP(+) as electron acceptor. Is involved in the degradation of glucose through a modified Entner-Doudoroff pathway. The sequence is that of Glucose 1-dehydrogenase from Haloarcula marismortui (strain ATCC 43049 / DSM 3752 / JCM 8966 / VKM B-1809) (Halobacterium marismortui).